The sequence spans 111 residues: WAP four-disulfide core domain protein 12 (111 aa).

Residues 1-23 form the signal peptide; sequence MGSSSFLVLMVSLTLVTLVAAEG. In terms of domain architecture, WAP spans 27–74; sequence GIEKAGVCPADNVRCFKSDPPQCHTDQDCLGERKCCYLHCGFKCVIPV. 4 cysteine pairs are disulfide-bonded: Cys34–Cys62, Cys41–Cys66, Cys49–Cys61, and Cys55–Cys70. Residues 80 to 111 are disordered; the sequence is GGNKDEDVSGPCPEPGWEAKSPGSSSTGCPQK. The span at 101-111 shows a compositional bias: polar residues; that stretch reads PGSSSTGCPQK.

Its subcellular location is the secreted. In terms of biological role, antibacterial protein. Putative acid-stable proteinase inhibitor. This is WAP four-disulfide core domain protein 12 (WFDC12) from Chlorocebus aethiops (Green monkey).